The primary structure comprises 296 residues: Porphobilinogen deaminase (296 aa).

Cys-232 carries the post-translational modification S-(dipyrrolylmethanemethyl)cysteine.

The protein belongs to the HMBS family. In terms of assembly, monomer. The cofactor is dipyrromethane.

It catalyses the reaction 4 porphobilinogen + H2O = hydroxymethylbilane + 4 NH4(+). It functions in the pathway porphyrin-containing compound metabolism; protoporphyrin-IX biosynthesis; coproporphyrinogen-III from 5-aminolevulinate: step 2/4. In terms of biological role, tetrapolymerization of the monopyrrole PBG into the hydroxymethylbilane pre-uroporphyrinogen in several discrete steps. The chain is Porphobilinogen deaminase from Corynebacterium aurimucosum (strain ATCC 700975 / DSM 44827 / CIP 107346 / CN-1) (Corynebacterium nigricans).